The primary structure comprises 88 residues: MATKIRLARAGAKRKPFYQVVVADERCKRDGRFIENVGTYDPNQNPAVFKLEEAKTLEWLGKGAQPTDTVKQILKKAGIWEKFVSKLA.

This sequence belongs to the bacterial ribosomal protein bS16 family.

This chain is Small ribosomal subunit protein bS16, found in Geotalea uraniireducens (strain Rf4) (Geobacter uraniireducens).